We begin with the raw amino-acid sequence, 464 residues long: Mitogen-activated protein kinase 10 (464 aa).

The region spanning 64–359 is the Protein kinase domain; that stretch reads YQNLKPIGSG…VDDALQHPYI (296 aa). ATP-binding positions include 70 to 78 and K93; that span reads IGSGAQGIV. The active-site Proton acceptor is the D189. T221 is subject to Phosphothreonine; by MAP2K7. Residues 221-223 carry the TXY motif; that stretch reads TPY. Y223 carries the phosphotyrosine; by MAP2K4 modification. Residues 405-464 form a disordered region; sequence TKNGVVKGQPSPSGAAVNSSESLPPSSSVNDISSMSTDQTLASDTDSSLEASAGPLGCCR. Residues 423–432 show a composition bias toward low complexity; the sequence is SSESLPPSSS. Positions 433 to 454 are enriched in polar residues; it reads VNDISSMSTDQTLASDTDSSLE. 2 S-palmitoyl cysteine lipidation sites follow: C462 and C463.

Belongs to the protein kinase superfamily. CMGC Ser/Thr protein kinase family. MAP kinase subfamily. As to quaternary structure, interacts with MAPK8IP1/JIP-1 and MAPK8IP3/JIP-3/JSAP1. Interacts with SPAG9/MAPK8IP4/JIP4. Interacts with HDAC9 and MAPKBP1. Interacts with ARRB2; the interaction enhances MAPK10 activation by MAP3K5. Interacts with SARM1. Interacts with JUND; interaction is inhibited in the presence of MEN1. The cofactor is Mg(2+). Post-translationally, dually phosphorylated on Thr-221 and Tyr-223 by MAP2K4 and MAP2K7, which activates the enzyme. MAP2K7 shows a strong preference for Thr-221 while MAP2K4 phosphorylates Tyr-223 preferentially. Weakly autophosphorylated on threonine and tyrosine residues in vitro. In terms of processing, palmitoylation regulates subcellular location and axonal development.

Its subcellular location is the cytoplasm. The protein localises to the membrane. It is found in the nucleus. The protein resides in the mitochondrion. It catalyses the reaction L-seryl-[protein] + ATP = O-phospho-L-seryl-[protein] + ADP + H(+). It carries out the reaction L-threonyl-[protein] + ATP = O-phospho-L-threonyl-[protein] + ADP + H(+). Activated by threonine and tyrosine phosphorylation by two dual specificity kinases, MAP2K4 and MAP2K7. MAP2K7 phosphorylates MAPK10 on Thr-221 causing a conformational change and a large increase in Vmax for the enzyme. MAP2K4 then phosphorylates Tyr-223 resulting in a further increase in Vmax. Inhibited by dual specificity phosphatases, such as DUSP1. Inhibited by HDAC9. In terms of biological role, serine/threonine-protein kinase involved in various processes such as neuronal proliferation, differentiation, migration and programmed cell death. Extracellular stimuli such as pro-inflammatory cytokines or physical stress stimulate the stress-activated protein kinase/c-Jun N-terminal kinase (SAP/JNK) signaling pathway. In this cascade, two dual specificity kinases MAP2K4/MKK4 and MAP2K7/MKK7 phosphorylate and activate MAPK10/JNK3. In turn, MAPK10/JNK3 phosphorylates a number of transcription factors, primarily components of AP-1 such as JUN and ATF2 and thus regulates AP-1 transcriptional activity. Plays regulatory roles in the signaling pathways during neuronal apoptosis. Phosphorylates the neuronal microtubule regulator STMN2. Acts in the regulation of the amyloid-beta precursor protein/APP signaling during neuronal differentiation by phosphorylating APP. Also participates in neurite growth in spiral ganglion neurons. Phosphorylates the CLOCK-BMAL1 heterodimer and plays a role in the photic regulation of the circadian clock. Phosphorylates JUND and this phosphorylation is inhibited in the presence of MEN1. This Rattus norvegicus (Rat) protein is Mitogen-activated protein kinase 10 (Mapk10).